Consider the following 200-residue polypeptide: Beta-1,6-glucan synthesis-associated protein KEG1 (200 aa).

Residues 1–15 (MAGIKLTHKLYQYYQ) are Lumenal-facing. A helical transmembrane segment spans residues 16 to 36 (LATSFLYAALLIRWLILMPLV). Residues 37–44 (GSRFLPGG) lie on the Cytoplasmic side of the membrane. A helical transmembrane segment spans residues 45-65 (IHEFLIYLMFYSSIMEVIWLL). The Lumenal segment spans residues 66-82 (RFHGFKYGLLSRTFLKD). A helical membrane pass occupies residues 83–103 (LNFIYLVSVIHFYDDYEHALI). Residues 104-145 (LKNASYSSFIISLSLSQAYCHWCKLFKRKGVKERTLVWKVNT) lie on the Cytoplasmic side of the membrane. Residues 146-166 (FVTLPILYLSEFALLLLNIQV) form a helical membrane-spanning segment. Topologically, residues 167-173 (KNYHSTP) are lumenal. Residues 174-194 (TLDIINRVVLLAYFPVLLTAY) form a helical membrane-spanning segment. The Cytoplasmic portion of the chain corresponds to 195–200 (KKLLTK).

As to quaternary structure, interacts with KRE6.

Its subcellular location is the endoplasmic reticulum membrane. Involved in the biosynthesis of (1-&gt;6)-beta-D-glucan polymers of the cell wall. Required for viability. Involved in maintaining chromosome stability. The polypeptide is Beta-1,6-glucan synthesis-associated protein KEG1 (KEG1) (Saccharomyces cerevisiae (strain ATCC 204508 / S288c) (Baker's yeast)).